The primary structure comprises 363 residues: UDP-3-O-acylglucosamine N-acyltransferase (363 aa).

His237 acts as the Proton acceptor in catalysis. Residues 338–363 are disordered; that stretch reads EQNSTDRAPNAKMLEVGVDPETTCSS.

It belongs to the transferase hexapeptide repeat family. LpxD subfamily. Homotrimer.

It catalyses the reaction a UDP-3-O-[(3R)-3-hydroxyacyl]-alpha-D-glucosamine + a (3R)-hydroxyacyl-[ACP] = a UDP-2-N,3-O-bis[(3R)-3-hydroxyacyl]-alpha-D-glucosamine + holo-[ACP] + H(+). The protein operates within bacterial outer membrane biogenesis; LPS lipid A biosynthesis. Catalyzes the N-acylation of UDP-3-O-acylglucosamine using 3-hydroxyacyl-ACP as the acyl donor. Is involved in the biosynthesis of lipid A, a phosphorylated glycolipid that anchors the lipopolysaccharide to the outer membrane of the cell. The polypeptide is UDP-3-O-acylglucosamine N-acyltransferase (Synechococcus sp. (strain JA-2-3B'a(2-13)) (Cyanobacteria bacterium Yellowstone B-Prime)).